Reading from the N-terminus, the 340-residue chain is Glyceraldehyde-3-phosphate dehydrogenase 2 (340 aa).

NADP(+)-binding positions include 12 to 13 (RI), Arg-78, and Thr-120. D-glyceraldehyde 3-phosphate contacts are provided by residues 151–153 (SCT) and Thr-182. The active-site Nucleophile is Cys-152. Position 183 (Asn-183) interacts with NADP(+). D-glyceraldehyde 3-phosphate is bound by residues Arg-197, 210 to 211 (TG), and Arg-233. An NADP(+)-binding site is contributed by Asn-315.

The protein belongs to the glyceraldehyde-3-phosphate dehydrogenase family. In terms of assembly, homotetramer. Interacts with BrxC. In terms of processing, in response to oxidative stress, the active site Cys likely reacts with bacillithiol (BSH) to form mixed disulfides to protect the Cys residue against overoxidation. S-bacillithiolation presumably leads to loss of catalytic activity. Debacillithiolation by monothiol bacilliredoxin BrxC restores the activity.

The protein resides in the cytoplasm. The catalysed reaction is D-glyceraldehyde 3-phosphate + phosphate + NADP(+) = (2R)-3-phospho-glyceroyl phosphate + NADPH + H(+). The enzyme catalyses D-glyceraldehyde 3-phosphate + phosphate + NAD(+) = (2R)-3-phospho-glyceroyl phosphate + NADH + H(+). It functions in the pathway carbohydrate biosynthesis; gluconeogenesis. Its function is as follows. Involved in the gluconeogenesis. Catalyzes the oxidative phosphorylation of glyceraldehyde 3-phosphate (G3P) to 1,3-bisphosphoglycerate (BPG) using the cofactor NADP. The first reaction step involves the formation of a hemiacetal intermediate between G3P and a cysteine residue, and this hemiacetal intermediate is then oxidized to a thioester, with concomitant reduction of NADP to NADPH. The reduced NADPH is then exchanged with the second NADP, and the thioester is attacked by a nucleophilic inorganic phosphate to produce BPG. This chain is Glyceraldehyde-3-phosphate dehydrogenase 2, found in Bacillus subtilis (strain 168).